The sequence spans 930 residues: Isoleucine--tRNA ligase (930 aa).

The 'HIGH' region signature appears at 57-67 (PYANGNIHVGH). Residue E554 coordinates L-isoleucyl-5'-AMP. The 'KMSKS' region signature appears at 595 to 599 (KMSKS). ATP is bound at residue K598. The Zn(2+) site is built by C888, C891, C908, and C911.

Belongs to the class-I aminoacyl-tRNA synthetase family. IleS type 1 subfamily. In terms of assembly, monomer. The cofactor is Zn(2+).

The protein resides in the cytoplasm. It catalyses the reaction tRNA(Ile) + L-isoleucine + ATP = L-isoleucyl-tRNA(Ile) + AMP + diphosphate. Functionally, catalyzes the attachment of isoleucine to tRNA(Ile). As IleRS can inadvertently accommodate and process structurally similar amino acids such as valine, to avoid such errors it has two additional distinct tRNA(Ile)-dependent editing activities. One activity is designated as 'pretransfer' editing and involves the hydrolysis of activated Val-AMP. The other activity is designated 'posttransfer' editing and involves deacylation of mischarged Val-tRNA(Ile). The sequence is that of Isoleucine--tRNA ligase from Streptococcus gordonii (strain Challis / ATCC 35105 / BCRC 15272 / CH1 / DL1 / V288).